The sequence spans 223 residues: RNA-free ribonuclease P (223 aa).

Belongs to the HARP family.

It catalyses the reaction Endonucleolytic cleavage of RNA, removing 5'-extranucleotides from tRNA precursor.. In terms of biological role, RNA-free RNase P that catalyzes the removal of the 5'-leader sequence from pre-tRNA to produce the mature 5'-terminus. The polypeptide is RNA-free ribonuclease P (Methanococcus maripaludis (strain C5 / ATCC BAA-1333)).